Reading from the N-terminus, the 188-residue chain is GMP synthase [glutamine-hydrolyzing] subunit A (188 aa).

Residues 2–188 (KIYIIDNGGQ…FKNFIEKCRR (187 aa)) enclose the Glutamine amidotransferase type-1 domain. Residue Cys79 is the Nucleophile of the active site. Catalysis depends on residues His166 and Glu168.

In terms of assembly, heterodimer composed of a glutamine amidotransferase subunit (A) and a GMP-binding subunit (B).

It carries out the reaction XMP + L-glutamine + ATP + H2O = GMP + L-glutamate + AMP + diphosphate + 2 H(+). The protein operates within purine metabolism; GMP biosynthesis; GMP from XMP (L-Gln route): step 1/1. Functionally, catalyzes the synthesis of GMP from XMP. The protein is GMP synthase [glutamine-hydrolyzing] subunit A of Picrophilus torridus (strain ATCC 700027 / DSM 9790 / JCM 10055 / NBRC 100828 / KAW 2/3).